Here is a 93-residue protein sequence, read N- to C-terminus: Large ribosomal subunit protein bL27 (93 aa).

Residues 1–10 constitute a propeptide that is removed on maturation; it reads MLLKLQIQLF.

Belongs to the bacterial ribosomal protein bL27 family. The N-terminus is cleaved by ribosomal processing cysteine protease Prp.

In Phytoplasma australiense, this protein is Large ribosomal subunit protein bL27.